A 70-amino-acid polypeptide reads, in one-letter code: Large ribosomal subunit protein bL28 (70 aa).

Belongs to the bacterial ribosomal protein bL28 family.

This Thermosipho melanesiensis (strain DSM 12029 / CIP 104789 / BI429) protein is Large ribosomal subunit protein bL28.